The chain runs to 131 residues: ATP synthase epsilon chain (131 aa).

The protein belongs to the ATPase epsilon chain family. In terms of assembly, F-type ATPases have 2 components, CF(1) - the catalytic core - and CF(0) - the membrane proton channel. CF(1) has five subunits: alpha(3), beta(3), gamma(1), delta(1), epsilon(1). CF(0) has three main subunits: a, b and c.

It localises to the cell membrane. Functionally, produces ATP from ADP in the presence of a proton gradient across the membrane. The polypeptide is ATP synthase epsilon chain (Bacillus pumilus (strain SAFR-032)).